A 41-amino-acid polypeptide reads, in one-letter code: Histone H2B.3, sperm (41 aa).

The disordered stretch occupies residues 1-41 (MPRSPSKSSPKKGSPRKASPKRGGKGAKRAGKGGRRRTVVK). 4 consecutive short sequence motifs (SPKK motif) follow at residues 4–7 (SPSK), 9–12 (SPKK), 14–17 (SPRK), and 19–22 (SPKR). The span at 9–41 (SPKKGSPRKASPKRGGKGAKRAGKGGRRRTVVK) shows a compositional bias: basic residues. A phosphoserine mark is found at Ser14 and Ser19.

Belongs to the histone H2B family. The nucleosome is a histone octamer containing two molecules each of H2A, H2B, H3 and H4 assembled in one H3-H4 heterotetramer and two H2A-H2B heterodimers. The octamer wraps approximately 147 bp of DNA. Monoubiquitination gives a specific tag for epigenetic transcriptional activation and is also prerequisite for histone H3 'Lys-4' and 'Lys-79' methylation. In terms of processing, phosphorylated on SPKK motifs 3 and 4; which may regulate DNA binding. Dephosphorylated during maturation of spermatids to mature sperm and rephosphorylated at fertilization.

Its subcellular location is the nucleus. The protein localises to the chromosome. Its function is as follows. Core component of nucleosome. Nucleosomes wrap and compact DNA into chromatin, limiting DNA accessibility to the cellular machineries which require DNA as a template. Histones thereby play a central role in transcription regulation, DNA repair, DNA replication and chromosomal stability. DNA accessibility is regulated via a complex set of post-translational modifications of histones, also called histone code, and nucleosome remodeling. This chain is Histone H2B.3, sperm, found in Echinus esculentus (Sea urchin).